We begin with the raw amino-acid sequence, 243 residues long: Orotidine 5'-phosphate decarboxylase (243 aa).

Substrate-binding positions include aspartate 19, lysine 41, 69–78, threonine 124, arginine 185, glutamine 194, glycine 214, and arginine 215; that span reads DLKFFDIPAT. Lysine 71 (proton donor) is an active-site residue.

This sequence belongs to the OMP decarboxylase family. Type 1 subfamily. Homodimer.

It catalyses the reaction orotidine 5'-phosphate + H(+) = UMP + CO2. Its pathway is pyrimidine metabolism; UMP biosynthesis via de novo pathway; UMP from orotate: step 2/2. In terms of biological role, catalyzes the decarboxylation of orotidine 5'-monophosphate (OMP) to uridine 5'-monophosphate (UMP). In Xanthomonas axonopodis pv. citri (strain 306), this protein is Orotidine 5'-phosphate decarboxylase.